Here is a 549-residue protein sequence, read N- to C-terminus: Chaperonin GroEL 1 (549 aa).

ATP is bound by residues 30–33, Lys51, 87–91, Gly415, 479–481, and Asp495; these read TLGP, DGTTT, and NAA.

Belongs to the chaperonin (HSP60) family. In terms of assembly, forms a cylinder of 14 subunits composed of two heptameric rings stacked back-to-back. Interacts with the co-chaperonin GroES.

It localises to the cytoplasm. It catalyses the reaction ATP + H2O + a folded polypeptide = ADP + phosphate + an unfolded polypeptide.. Its function is as follows. Together with its co-chaperonin GroES, plays an essential role in assisting protein folding. The GroEL-GroES system forms a nano-cage that allows encapsulation of the non-native substrate proteins and provides a physical environment optimized to promote and accelerate protein folding. The protein is Chaperonin GroEL 1 of Azoarcus sp. (strain BH72).